A 159-amino-acid polypeptide reads, in one-letter code: Thymic stromal lymphopoietin (159 aa).

The first 28 residues, 1–28 (MFPFALLYVLSVSFRKIFILQLVGLVLT), serve as a signal peptide directing secretion. Intrachain disulfides connect cysteine 34–cysteine 110, cysteine 69–cysteine 75, and cysteine 90–cysteine 137. Asparagine 64 carries an N-linked (GlcNAc...) asparagine glycan. The N-linked (GlcNAc...) asparagine glycan is linked to asparagine 119.

Interacts with a receptor composed of CRLF2 and IL7R. Binding of TSLP to CRLF2/TSLPR is a mechanistic prerequisite for recruitment of IL7R to the high-affinity ternary complex. As to expression, isoform 1 is expressed in a number of tissues including heart, liver and prostate. Isoform 2 is the predominant form in keratinocytes of oral mucosa, skin and in salivary glands. It is secreted into saliva.

It is found in the secreted. Functionally, cytokine that induces the release of T-cell-attracting chemokines from monocytes and, in particular, enhances the maturation of CD11c(+) dendritic cells. Can induce allergic inflammation by directly activating mast cells. Its function is as follows. May act as an antimicrobial peptide in the oral cavity and on the skin. The protein is Thymic stromal lymphopoietin (TSLP) of Homo sapiens (Human).